Consider the following 90-residue polypeptide: Small ribosomal subunit protein uS17m (90 aa).

Belongs to the universal ribosomal protein uS17 family. In terms of assembly, component of the mitochondrial small ribosomal subunit (mt-SSU). Mature yeast 74S mitochondrial ribosomes consist of a small (37S) and a large (54S) subunit. The 37S small subunit contains a 15S ribosomal RNA (15S mt-rRNA) and at least 32 different proteins. The 54S large subunit contains a 21S rRNA (21S mt-rRNA) and at least 45 different proteins.

It localises to the mitochondrion. Functionally, component of the mitochondrial ribosome (mitoribosome), a dedicated translation machinery responsible for the synthesis of mitochondrial genome-encoded proteins, including at least some of the essential transmembrane subunits of the mitochondrial respiratory chain. The mitoribosomes are attached to the mitochondrial inner membrane and translation products are cotranslationally integrated into the membrane. uS17m may have a meiosis-specific role as it accumulates during the middle stage of sporulation. This is Small ribosomal subunit protein uS17m from Schizosaccharomyces pombe (strain 972 / ATCC 24843) (Fission yeast).